The primary structure comprises 395 residues: Succinyl-diaminopimelate desuccinylase (395 aa).

Histidine 74 contributes to the Zn(2+) binding site. Aspartate 76 is a catalytic residue. Aspartate 107 contributes to the Zn(2+) binding site. Catalysis depends on glutamate 141, which acts as the Proton acceptor. The Zn(2+) site is built by glutamate 142, glutamate 170, and histidine 368.

It belongs to the peptidase M20A family. DapE subfamily. As to quaternary structure, homodimer. The cofactor is Zn(2+). Requires Co(2+) as cofactor.

It carries out the reaction N-succinyl-(2S,6S)-2,6-diaminopimelate + H2O = (2S,6S)-2,6-diaminopimelate + succinate. Its pathway is amino-acid biosynthesis; L-lysine biosynthesis via DAP pathway; LL-2,6-diaminopimelate from (S)-tetrahydrodipicolinate (succinylase route): step 3/3. In terms of biological role, catalyzes the hydrolysis of N-succinyl-L,L-diaminopimelic acid (SDAP), forming succinate and LL-2,6-diaminopimelate (DAP), an intermediate involved in the bacterial biosynthesis of lysine and meso-diaminopimelic acid, an essential component of bacterial cell walls. In Brucella abortus (strain S19), this protein is Succinyl-diaminopimelate desuccinylase.